The following is a 92-amino-acid chain: Large ribosomal subunit protein eL43A (92 aa).

The C4-type zinc-finger motif lies at 39–60 (CSFCGKKTVKRGAAGIWTCSCC). Position 40 is a phosphoserine (S40).

Belongs to the eukaryotic ribosomal protein eL43 family. Component of the large ribosomal subunit (LSU). Mature yeast ribosomes consist of a small (40S) and a large (60S) subunit. The 40S small subunit contains 1 molecule of ribosomal RNA (18S rRNA) and 33 different proteins (encoded by 57 genes). The large 60S subunit contains 3 rRNA molecules (25S, 5.8S and 5S rRNA) and 46 different proteins (encoded by 81 genes).

The protein resides in the cytoplasm. Component of the ribosome, a large ribonucleoprotein complex responsible for the synthesis of proteins in the cell. The small ribosomal subunit (SSU) binds messenger RNAs (mRNAs) and translates the encoded message by selecting cognate aminoacyl-transfer RNA (tRNA) molecules. The large subunit (LSU) contains the ribosomal catalytic site termed the peptidyl transferase center (PTC), which catalyzes the formation of peptide bonds, thereby polymerizing the amino acids delivered by tRNAs into a polypeptide chain. The nascent polypeptides leave the ribosome through a tunnel in the LSU and interact with protein factors that function in enzymatic processing, targeting, and the membrane insertion of nascent chains at the exit of the ribosomal tunnel. The sequence is that of Large ribosomal subunit protein eL43A from Saccharomyces cerevisiae (strain ATCC 204508 / S288c) (Baker's yeast).